The primary structure comprises 231 residues: Thiamine import ATP-binding protein ThiQ (231 aa).

One can recognise an ABC transporter domain in the interval 2–230; it reads LRLEDLDIRK…PPPALRGYLG (229 aa). Position 32 to 39 (32 to 39) interacts with ATP; it reads GPSGAGKS.

Belongs to the ABC transporter superfamily. Thiamine importer (TC 3.A.1.19.1) family. The complex is composed of two ATP-binding proteins (ThiQ), two transmembrane proteins (ThiP) and a solute-binding protein (ThiB).

It is found in the cell inner membrane. The enzyme catalyses thiamine(out) + ATP + H2O = thiamine(in) + ADP + phosphate + H(+). Part of the ABC transporter complex ThiBPQ involved in thiamine import. Responsible for energy coupling to the transport system. This Ruegeria sp. (strain TM1040) (Silicibacter sp.) protein is Thiamine import ATP-binding protein ThiQ.